The primary structure comprises 221 residues: Lipoprotein-releasing system ATP-binding protein LolD (221 aa).

In terms of domain architecture, ABC transporter spans 6 to 220 (LILKKISKHY…YNLKNGLLNI (215 aa)). Residue 42 to 49 (GSSGSGKS) participates in ATP binding.

Belongs to the ABC transporter superfamily. Lipoprotein translocase (TC 3.A.1.125) family. In terms of assembly, the complex is composed of two ATP-binding proteins (LolD) and two transmembrane proteins (LolC and LolE).

It is found in the cell inner membrane. Its function is as follows. Part of the ABC transporter complex LolCDE involved in the translocation of mature outer membrane-directed lipoproteins, from the inner membrane to the periplasmic chaperone, LolA. Responsible for the formation of the LolA-lipoprotein complex in an ATP-dependent manner. The sequence is that of Lipoprotein-releasing system ATP-binding protein LolD from Rickettsia typhi (strain ATCC VR-144 / Wilmington).